The primary structure comprises 136 residues: Nucleoside diphosphate kinase (136 aa).

Residues Lys-10, Phe-58, Arg-86, Thr-92, Arg-104, and Asn-114 each contribute to the ATP site. The Pros-phosphohistidine intermediate role is filled by His-117.

The protein belongs to the NDK family. In terms of assembly, homotetramer. Mg(2+) serves as cofactor.

It is found in the cytoplasm. The enzyme catalyses a 2'-deoxyribonucleoside 5'-diphosphate + ATP = a 2'-deoxyribonucleoside 5'-triphosphate + ADP. It carries out the reaction a ribonucleoside 5'-diphosphate + ATP = a ribonucleoside 5'-triphosphate + ADP. Its function is as follows. Major role in the synthesis of nucleoside triphosphates other than ATP. The ATP gamma phosphate is transferred to the NDP beta phosphate via a ping-pong mechanism, using a phosphorylated active-site intermediate. The sequence is that of Nucleoside diphosphate kinase from Saccharopolyspora erythraea (strain ATCC 11635 / DSM 40517 / JCM 4748 / NBRC 13426 / NCIMB 8594 / NRRL 2338).